The primary structure comprises 495 residues: REST corepressor 3 (495 aa).

In terms of domain architecture, ELM2 spans 1–83 (MRVGAEYQAR…KSLADLPNFT (83 aa)). K20 is covalently cross-linked (Glycyl lysine isopeptide (Lys-Gly) (interchain with G-Cter in SUMO2)). The region spanning 84–135 (PFPDEWTVEDKVLFEQAFSFHGKSFHRIQQMLPDKTIASLVKYYYSWKKTRS) is the SANT 1 domain. The disordered stretch occupies residues 147–219 (LANRHNQGDS…SQRSKCRPPK (73 aa)). Phosphoserine is present on residues S156 and S171. Residues 162–184 (ETHPMDGNDSDYDPKKEAKKEGN) are compositionally biased toward basic and acidic residues. K193 is covalently cross-linked (Glycyl lysine isopeptide (Lys-Gly) (interchain with G-Cter in SUMO2)). Basic residues predominate over residues 205-217 (QHRHHSQRSKCRP). The stretch at 237-273 (AANTILRQLDMELISLKRQVQNAKQVNSALKQKMEGG) forms a coiled coil. K285 is covalently cross-linked (Glycyl lysine isopeptide (Lys-Gly) (interchain with G-Cter in SUMO2)). The 52-residue stretch at 285–336 (KINARWTTEEQLLAVQGVRKYGKDFQAIADVIGNKTVGQVKNFFVNYRRRFN) folds into the SANT 2 domain. The segment at 346 to 495 (AEQGTQASNG…IQTDSQSSLH (150 aa)) is disordered. The segment covering 348–357 (QGTQASNGDA) has biased composition (polar residues). A Phosphothreonine modification is found at T376. The span at 393 to 405 (PSPPAPSSTPTPT) shows a compositional bias: pro residues. The segment covering 419-428 (RPTLPAAPAL) has biased composition (low complexity). An asymmetric dimethylarginine mark is found at R445 and R457. Polar residues predominate over residues 475 to 495 (VGGQQPPSLIGIQTDSQSSLH).

This sequence belongs to the CoREST family.

The protein localises to the nucleus. Functionally, may act as a component of a corepressor complex that represses transcription. In Homo sapiens (Human), this protein is REST corepressor 3 (RCOR3).